The following is a 488-amino-acid chain: Mannosylglycerate hydrolase MGH1 (488 aa).

Residues Tyr-94, 98–101, Tyr-146, Gln-167, and Gly-227 each bind substrate; that span reads WNWD. The active-site Proton donor is the Asp-229. Substrate-binding positions include Arg-262 and 415–416; that span reads YW. Glu-459 functions as the Proton acceptor in the catalytic mechanism.

This sequence belongs to the glycosyl hydrolase 63 family.

It catalyses the reaction (2R)-2-O-(alpha-D-mannosyl)-glycerate + H2O = D-mannose + (R)-glycerate. The catalysed reaction is (2R)-2-O-(alpha-D-glucopyranosyl)-glycerate + H2O = (R)-glycerate + D-glucose. Its activity is regulated as follows. Activity is not dependent on divalent cations, but it is enhanced by Mn(2+). In terms of biological role, catalyzes the hydrolysis of alpha-D-mannosyl-glycerate (MG) to D-glycerate and D-mannose. Can also hydrolyze alpha-D-glucopyranosyl-glycerate (GG)with lower efficiency. The chain is Mannosylglycerate hydrolase MGH1 from Selaginella moellendorffii (Spikemoss).